A 528-amino-acid chain; its full sequence is Phosphoenolpyruvate carboxykinase (ATP) (528 aa).

Substrate is bound by residues R56, Y192, and K198. ATP-binding positions include K198, H217, and 233 to 241 (GLSGTGKTT). The Mn(2+) site is built by K198 and H217. D254 contacts Mn(2+). ATP contacts are provided by E282, R319, and T444. A substrate-binding site is contributed by R319.

This sequence belongs to the phosphoenolpyruvate carboxykinase (ATP) family. The cofactor is Mn(2+).

It localises to the cytoplasm. The catalysed reaction is oxaloacetate + ATP = phosphoenolpyruvate + ADP + CO2. It participates in carbohydrate biosynthesis; gluconeogenesis. Functionally, involved in the gluconeogenesis. Catalyzes the conversion of oxaloacetate (OAA) to phosphoenolpyruvate (PEP) through direct phosphoryl transfer between the nucleoside triphosphate and OAA. In Geobacillus kaustophilus (strain HTA426), this protein is Phosphoenolpyruvate carboxykinase (ATP).